Consider the following 144-residue polypeptide: GGGGGPAGGAEDLAELDQLLRQRPSGAMPSEIKGLEFSEGLAQGKKQRLSKKLRRKLQMWLWSQTFCPVLYAWNDLGSRFWARYVKVGSCFSKRSCSVPEGMVCKPSKSVHLTVLRWRCQRRGGQRCGWIPIQYPIISECKCSC.

The N-terminal stretch at 1 to 4 (GGGG) is a signal peptide. Disulfide bonds link cysteine 67-cysteine 104, cysteine 90-cysteine 140, cysteine 96-cysteine 142, and cysteine 119-cysteine 127.

Belongs to the noggin family. As to quaternary structure, homodimer. Interacts with GDF5; inhibits chondrocyte differentiation. As to expression, prominently expressed in the CNS. High levels found in mitral and tufted cells in the olfactory bulb, piriform cortex of the brain and Purkinje cells in the cerebellum. Low level expression seen in the lung, skeletal muscle and skin.

The protein resides in the secreted. In terms of biological role, essential for cartilage morphogenesis and joint formation. Inhibitor of bone morphogenetic proteins (BMP) signaling which is required for growth and patterning of the neural tube and somite. Inhibits chondrocyte differentiation through its interaction with GDF5 and, probably, GDF6. The sequence is that of Noggin (Nog) from Rattus norvegicus (Rat).